The chain runs to 315 residues: Calumenin (315 aa).

Positions 1 to 19 (MDLRQFLMCLSLCTAFALS) are cleaved as a signal peptide. A Phosphoserine modification is found at Ser44. Tyr47 is subject to Phosphotyrosine. A Phosphothreonine modification is found at Thr65. EF-hand domains lie at 68–103 (ESKE…AQKK), 104–139 (YIYD…TYLD), 151–186 (QMMV…EEYD), 188–223 (MKDI…HDGN), 229–264 (WVKT…SDYD), and 265–300 (HAEA…FVGS). Phosphoserine is present on Ser69. Ca(2+) contacts are provided by Asp81, Asp83, Asp85, Glu92, Asp117, Asn119, Asp121, and Glu128. Residue Asn131 is glycosylated (N-linked (GlcNAc...) asparagine). Asp164 lines the Ca(2+) pocket. Lys165 is subject to N6-acetyllysine. Residues Asp166, Asp168, Glu175, Asp201, Asn203, Asp205, Glu212, Asp242, Asn244, Asp246, Lys248, and Glu253 each coordinate Ca(2+). At Thr254 the chain carries Phosphothreonine. Residues Ser261 and Ser277 each carry the phosphoserine modification. Residues Asp278, Asn280, Asp282, Lys284, and Glu289 each contribute to the Ca(2+) site. The Prevents secretion from ER signature appears at 312 to 315 (HDEF).

It belongs to the CREC family. In terms of assembly, interacts with GGCX.

The protein resides in the endoplasmic reticulum membrane. It is found in the golgi apparatus. It localises to the secreted. The protein localises to the melanosome. Its subcellular location is the sarcoplasmic reticulum lumen. Its function is as follows. Involved in regulation of vitamin K-dependent carboxylation of multiple N-terminal glutamate residues. Seems to inhibit gamma-carboxylase GGCX. Binds 7 calcium ions with a low affinity. This is Calumenin (CALU) from Bos taurus (Bovine).